A 346-amino-acid chain; its full sequence is MTQSLTITRPDDWHLHLRDGDMLRAVLPETARHFGRAIIMPNLVPPVVTGAEASAYRDRILAALPEGMTFEPLMTLYLTEDTDPADVAAAHASGLVKAVKLYPAGATTNSSSGVRDFDKVRPVLEKMAEIGLPLCTHGEVTDHDIDIFDREAVFIDRVLDPIRQSTPGLRVVMEHITTKDAADYVRSQDKDLGATITTHHLIINRNHILVGGIKPHYYCLPVAKREEHRLALRQAATSGDARFFLGTDSAPHTDANKLQTCGCAGCFTATNTMALLAHVFEEEGALDKLEGFASKNGPAFYRLPENDGQITLVKQDAPVAFPEQIDTPDGPVTVFDPSFAVHWTVT.

The Zn(2+) site is built by H14 and H16. Substrate contacts are provided by residues 16 to 18 (HLR) and N42. Residues K100, H137, and H175 each coordinate Zn(2+). K100 is modified (N6-carboxylysine). H137 serves as a coordination point for substrate. L220 is a binding site for substrate. D248 provides a ligand contact to Zn(2+). D248 is a catalytic residue. H252 and A264 together coordinate substrate.

This sequence belongs to the metallo-dependent hydrolases superfamily. DHOase family. Class II DHOase subfamily. Homodimer. The cofactor is Zn(2+).

It catalyses the reaction (S)-dihydroorotate + H2O = N-carbamoyl-L-aspartate + H(+). It functions in the pathway pyrimidine metabolism; UMP biosynthesis via de novo pathway; (S)-dihydroorotate from bicarbonate: step 3/3. Catalyzes the reversible cyclization of carbamoyl aspartate to dihydroorotate. This Ruegeria sp. (strain TM1040) (Silicibacter sp.) protein is Dihydroorotase.